We begin with the raw amino-acid sequence, 534 residues long: Putative ammonium transporter 1 (534 aa).

11 helical membrane-spanning segments follow: residues 31 to 51 (SFFLCSMALIIFFMQCGFAYL), 69 to 89 (LLDSCICIIGYWAIGWALAYG), 115 to 135 (FFFQYVFSATAATIVSGAVAE), 139 to 159 (FITYVTYCTVISTFIYPVLTH), 184 to 204 (FAGSGLVHLCGGSISFLAAWI), 223 to 243 (ILGHSVPFTALGGFILMFGFL), 263 to 283 (ALAMINTILSGAFAALIYLGV), 291 to 311 (WTLLLTINACLSGMVAACAGC), 318 to 338 (ACIWVGLGAGLIYLAFSKLMI), 346 to 366 (LDAFAVHAGGGFWGLMSSSII), and 401 to 421 (ICALAIIAWSLGVMLPIFWIL).

The protein belongs to the ammonia transporter channel (TC 1.A.11.2) family.

It is found in the membrane. Functionally, involved in the uptake of ammonia. This Caenorhabditis elegans protein is Putative ammonium transporter 1 (amt-1).